Here is a 256-residue protein sequence, read N- to C-terminus: ATP synthase peripheral stalk subunit b, mitochondrial (256 aa).

The N-terminal 42 residues, 1–42 (MLSRVVLSAAATAAPCLKNAAALGPGVLQATRAFHTGQPRLA), are a transit peptide targeting the mitochondrion. At lysine 131 the chain carries N6-succinyllysine. Lysine 139, lysine 154, lysine 162, lysine 221, lysine 225, lysine 233, and lysine 244 each carry N6-acetyllysine.

It belongs to the eukaryotic ATPase B chain family. As to quaternary structure, component of the ATP synthase complex composed at least of ATP5F1A/subunit alpha, ATP5F1B/subunit beta, ATP5MC1/subunit c (homooctomer), MT-ATP6/subunit a, MT-ATP8/subunit 8, ATP5ME/subunit e, ATP5MF/subunit f, ATP5MG/subunit g, ATP5MK/subunit k, ATP5MJ/subunit j, ATP5F1C/subunit gamma, ATP5F1D/subunit delta, ATP5F1E/subunit epsilon, ATP5PF/subunit F6, ATP5PB/subunit b, ATP5PD/subunit d, ATP5PO/subunit OSCP. ATP synthase complex consists of a soluble F(1) head domain (subunits alpha(3) and beta(3)) - the catalytic core - and a membrane F(0) domain - the membrane proton channel (subunits c, a, 8, e, f, g, k and j). These two domains are linked by a central stalk (subunits gamma, delta, and epsilon) rotating inside the F1 region and a stationary peripheral stalk (subunits F6, b, d, and OSCP).

It localises to the mitochondrion. Its subcellular location is the mitochondrion inner membrane. In terms of biological role, subunit b, of the mitochondrial membrane ATP synthase complex (F(1)F(0) ATP synthase or Complex V) that produces ATP from ADP in the presence of a proton gradient across the membrane which is generated by electron transport complexes of the respiratory chain. ATP synthase complex consist of a soluble F(1) head domain - the catalytic core - and a membrane F(1) domain - the membrane proton channel. These two domains are linked by a central stalk rotating inside the F(1) region and a stationary peripheral stalk. During catalysis, ATP synthesis in the catalytic domain of F(1) is coupled via a rotary mechanism of the central stalk subunits to proton translocation. In vivo, can only synthesize ATP although its ATP hydrolase activity can be activated artificially in vitro. Part of the complex F(0) domain. Part of the complex F(0) domain and the peripheric stalk, which acts as a stator to hold the catalytic alpha(3)beta(3) subcomplex and subunit a/ATP6 static relative to the rotary elements. This chain is ATP synthase peripheral stalk subunit b, mitochondrial, found in Mus musculus (Mouse).